The primary structure comprises 866 residues: Ribosome biogenesis protein BOP1 homolog (866 aa).

Disordered regions lie at residues 1-180 (MVAN…EETR) and 214-241 (PPEAKSRFKGGKNQDEYAAGDTSDEEDI). Acidic residues-rich tracts occupy residues 37–52 (VDDESASDYYESDEEN), 60–146 (GNDE…LEEP), and 167–179 (TAEDEDEEDDEET). WD repeat units lie at residues 527-566 (GHTDMIRSVSIEPKGEYLVTGSDDQTVKIWEVSTARCIRT), 568-608 (PTGD…SLLV), 697-735 (KSKGLIQCVLFHPVKPCLFVATQRHVRVYDLVKQELLKK), 738-777 (PSCKWISSMAIHPKGDNLLVATYEKKMMWFDLDLSTRPYQ), 781-820 (LHHSAIRNVAFHLRYPLFASASDDRSVIVSHGMVYNDLLQ), and 836-866 (VNDFGAFDVVFHPTQPWLFSSGADNTVRLYT).

It belongs to the WD repeat BOP1/ERB1 family.

Its subcellular location is the nucleus. It localises to the nucleolus. The protein resides in the nucleoplasm. Its function is as follows. Required for maturation of ribosomal RNAs and formation of the large ribosomal subunit. The protein is Ribosome biogenesis protein BOP1 homolog of Aedes aegypti (Yellowfever mosquito).